A 406-amino-acid chain; its full sequence is Tyrosine--tRNA ligase (406 aa).

Tyrosine 35 contributes to the L-tyrosine binding site. Positions 40–49 (ATSASLHIGH) match the 'HIGH' region motif. L-tyrosine is bound by residues tyrosine 167 and glutamine 171. The 'KMSKS' region signature appears at 227–231 (KMGKS). Lysine 230 lines the ATP pocket. Residues 341-405 (ILLVDLMVLA…IGKKKILRIV (65 aa)) enclose the S4 RNA-binding domain.

This sequence belongs to the class-I aminoacyl-tRNA synthetase family. TyrS type 1 subfamily. Homodimer.

The protein localises to the cytoplasm. The enzyme catalyses tRNA(Tyr) + L-tyrosine + ATP = L-tyrosyl-tRNA(Tyr) + AMP + diphosphate + H(+). Catalyzes the attachment of tyrosine to tRNA(Tyr) in a two-step reaction: tyrosine is first activated by ATP to form Tyr-AMP and then transferred to the acceptor end of tRNA(Tyr). This is Tyrosine--tRNA ligase from Borrelia recurrentis (strain A1).